An 81-amino-acid polypeptide reads, in one-letter code: Three-finger toxin 3FTx-Oxy6 (81 aa).

A signal peptide spans 1–21; it reads MKTLLLSLVVMTIVYLDLGYT. Intrachain disulfides connect C24–C43, C36–C61, C65–C73, and C74–C79.

The protein belongs to the three-finger toxin family. Short-chain subfamily. Expressed by the venom gland.

The protein localises to the secreted. The polypeptide is Three-finger toxin 3FTx-Oxy6 (Oxyuranus microlepidotus (Inland taipan)).